A 213-amino-acid polypeptide reads, in one-letter code: BAG family molecular chaperone regulator 6, mitochondrial (213 aa).

The 30-residue stretch at 53 to 82 folds into the IQ domain; it reads DDAAAARIQAAFRGHLVRRHAAAVRGADDE. The region spanning 75-152 is the BAG domain; that stretch reads AVRGADDEAT…GLQEVFDAVL (78 aa).

Interacts with CAM1-1 under normal conditions. Dissociation of the interaction when calcium-CAM1-1 binding increases under saline-alkaline stress.

The protein localises to the mitochondrion. In terms of biological role, co-chaperone that regulates stress responses. Acts as a negative regulator of saline-alkaline stress tolerance. May participate in stress response through regulating the homeostasis of iron, manganese and zinc ions. The polypeptide is BAG family molecular chaperone regulator 6, mitochondrial (Oryza sativa subsp. japonica (Rice)).